The primary structure comprises 375 residues: Venom allergen 5 (375 aa).

The signal sequence occupies residues 1-26 (MSAPVGIPSLLLALCALLCVLNAVRS). The SCP domain maps to 66 to 210 (VRLHNNLRSK…RRYTQIVCNY (145 aa)). N-linked (GlcNAc...) asparagine glycans are attached at residues asparagine 300 and asparagine 366.

This sequence belongs to the CRISP family. Venom allergen 5-like subfamily. Post-translationally, contains 9 disulfide bonds. As to expression, expressed by the venom gland.

It localises to the secreted. The protein is Venom allergen 5 of Lycosa singoriensis (Wolf spider).